Here is an 866-residue protein sequence, read N- to C-terminus: Scm-like with four MBT domains protein 1 (866 aa).

MBT repeat units follow at residues 20–120 (LSWE…LEAP), 128–232 (SDWD…LQPP), 242–348 (AEWQ…ISPP), and 356–453 (FDWA…LSTP). The segment at 34–42 (VPYGSFKHV) is antigenic epitope. The interval 641–777 (KKKNKRIGRP…DDENKPPSPK (137 aa)) is disordered. The segment covering 663–682 (KASKRRKRRKNVFVHKKKRS) has biased composition (basic residues). Polar residues predominate over residues 683 to 694 (SASVDNTPAGSP). Acidic residues-rich tracts occupy residues 699 to 713 (GEDE…DDSL) and 721 to 730 (QQDELQEESE). Positions 737 to 749 (CSSSPTQSEISTS) are enriched in low complexity. Phosphoserine is present on residues S767 and S775. The region spanning 796–864 (WSVADVVRFI…RIKFAFYEQF (69 aa)) is the SAM domain.

In terms of assembly, interacts with MYOD1. Component of the SLC (SFMBT1-LSD1-CoREST) corepressor complex, which also contains KDM1A/LSD1 and RCOR1/CoREST. Interacts with KDM1A/LSD1 and RCOR1/CoREST. Interacts with L3MBTL3. As to expression, expressed in all cell lines and normal tissues tested, including the thymus.

The protein resides in the nucleus. Histone-binding protein, which is part of various corepressor complexes. Mediates the recruitment of corepressor complexes to target genes, followed by chromatin compaction and repression of transcription. Plays a role during myogenesis: required for the maintenance of undifferentiated states of myogenic progenitor cells via interaction with MYOD1. Interaction with MYOD1 leads to the recruitment of associated corepressors and silencing of MYOD1 target genes. Part of the SLC complex in germ cells, where it may play a role during spermatogenesis. In Homo sapiens (Human), this protein is Scm-like with four MBT domains protein 1 (SFMBT1).